Here is a 309-residue protein sequence, read N- to C-terminus: tRNA pseudouridine synthase B (309 aa).

Residue Asp51 is the Nucleophile of the active site.

This sequence belongs to the pseudouridine synthase TruB family. Type 1 subfamily.

It catalyses the reaction uridine(55) in tRNA = pseudouridine(55) in tRNA. In terms of biological role, responsible for synthesis of pseudouridine from uracil-55 in the psi GC loop of transfer RNAs. The sequence is that of tRNA pseudouridine synthase B from Coxiella burnetii (strain RSA 331 / Henzerling II).